The sequence spans 518 residues: Integrator complex subunit 14 (518 aa).

Residues proline 2–leucine 204 enclose the VWFA domain. Residues serine 10, serine 12, and threonine 86 each coordinate Mg(2+). N6-acetyllysine is present on lysine 418.

Belongs to the Integrator subunit 14 family. As to quaternary structure, component of the Integrator complex, composed of core subunits INTS1, INTS2, INTS3, INTS4, INTS5, INTS6, INTS7, INTS8, INTS9/RC74, INTS10, INTS11/CPSF3L, INTS12, INTS13, INTS14 and INTS15. The core complex associates with protein phosphatase 2A subunits PPP2CA and PPP2R1A, to form the Integrator-PP2A (INTAC) complex. INTS14 is part of the tail subcomplex, composed of INTS10, INTS13, INTS14 and INTS15.

The protein resides in the nucleus. Functionally, component of the integrator complex, a multiprotein complex that terminates RNA polymerase II (Pol II) transcription in the promoter-proximal region of genes. The integrator complex provides a quality checkpoint during transcription elongation by driving premature transcription termination of transcripts that are unfavorably configured for transcriptional elongation: the complex terminates transcription by (1) catalyzing dephosphorylation of the C-terminal domain (CTD) of Pol II subunit POLR2A/RPB1 and SUPT5H/SPT5, (2) degrading the exiting nascent RNA transcript via endonuclease activity and (3) promoting the release of Pol II from bound DNA. The integrator complex is also involved in terminating the synthesis of non-coding Pol II transcripts, such as enhancer RNAs (eRNAs), small nuclear RNAs (snRNAs), telomerase RNAs and long non-coding RNAs (lncRNAs). Within the integrator complex, INTS14 is part of the integrator tail module that acts as a platform for the recruitment of transcription factors at promoters. This is Integrator complex subunit 14 from Bos taurus (Bovine).